A 235-amino-acid polypeptide reads, in one-letter code: Cytidylate kinase (235 aa).

11-19 (GPSGVGKST) serves as a coordination point for ATP.

This sequence belongs to the cytidylate kinase family. Type 1 subfamily.

The protein resides in the cytoplasm. The enzyme catalyses CMP + ATP = CDP + ADP. It catalyses the reaction dCMP + ATP = dCDP + ADP. In Syntrophotalea carbinolica (strain DSM 2380 / NBRC 103641 / GraBd1) (Pelobacter carbinolicus), this protein is Cytidylate kinase.